Consider the following 188-residue polypeptide: Putative manganese efflux pump MntP (188 aa).

A run of 6 helical transmembrane segments spans residues 3–23, 41–61, 62–82, 107–129, 143–163, and 168–188; these read LSATILLAFGMSMDAFAASIG, LIFGAIETLTPLVGWGLGMLA, SQFILEWNHWIAFILLVFLGG, LLVTTAFATSLDAMAVGVGLAFL, ATFIMSTLGMMVGRFIGPLLG, and ILGGIVLIGIGSEILWSHFAG.

This sequence belongs to the MntP (TC 9.B.29) family.

The protein resides in the cell inner membrane. Its function is as follows. Probably functions as a manganese efflux pump. In Klebsiella pneumoniae subsp. pneumoniae (strain ATCC 700721 / MGH 78578), this protein is Putative manganese efflux pump MntP.